A 275-amino-acid polypeptide reads, in one-letter code: ORF3a protein (275 aa).

The interval 1–39 is disordered; it reads MDLFMRIFTIGTVTLKQGEIKDATPSDFVRATATIPIQA. At 1–42 the chain is on the extracellular side; that stretch reads MDLFMRIFTIGTVTLKQGEIKDATPSDFVRATATIPIQASLP. O-linked (GalNAc...) threonine; by host glycosylation is found at T32 and T34. The 109-residue stretch at 33–141 folds into the CoV 3a-like viroporin TM domain; that stretch reads ATIPIQASLP…KCRSKNPLLY (109 aa). The chain crosses the membrane as a helical span at residues 43-61; it reads FGWLIVGVALLAVFQSASK. The Cytoplasmic portion of the chain corresponds to 62–67; the sequence is IITLKK. A helical membrane pass occupies residues 68 to 93; sequence RWQLALSKGVHFVCNLLLLFVTVYSH. Topologically, residues 94–101 are extracellular; that stretch reads LLLVAAGL. A helical membrane pass occupies residues 102 to 126; that stretch reads EAPFLYLYALVYFLQSINFVRIIMR. The Cytoplasmic portion of the chain corresponds to 127–275; the sequence is LWLCWKCRSK…EPTTTTSVPL (149 aa). Residues 145 to 237 enclose the CoV 3a-like viroporin CD domain; it reads YFLCWHTNCY…VTFFIYNKIV (93 aa). Residues 239-275 are disordered; it reads EPEEHVQIHTIDGSSGVVNPVMEPIYDEPTTTTSVPL.

Homodimer, a subset forms homotetramer of two homodimers linked non covalently. Interacts with M, S and E proteins. Also interacts with the accessory protein 7a. Interacts with host VPS39, sequestering it on late endosomes. Interacts with host HMGB1; the interaction enhances the association between HMGB1 and host BECN1, promoting reticulophagy. Interacts with HMOX1; the interaction promotes ORF3A-induced autophagy but is unlikely to be involved in ORF3A-mediated induction of reticulophagy. In terms of processing, exists in both O-glycosylated and non-glycosylated forms. The glycosylated form is associated with the virion.

It is found in the virion. The protein resides in the host cell membrane. The protein localises to the host endoplasmic reticulum membrane. It localises to the secreted. Its subcellular location is the host cytoplasm. It is found in the host endosome. The protein resides in the host lysosome. Plays a role in viral egress via lysosomal trafficking. Forms homotetrameric ion channels (viroporins) localized at endosomes and lysosomes, that may induce deacidification of lysosomes, allowing safe egress of virions via lysosomal trafficking. Also blocks autolysosome formation by binding and sequestering the host component VPS39 for homotypic fusion and protein sorting (HOPS) on late endosomes. This prevents fusion of autophagosomes with lysosomes, disrupting autophagy and facilitating virus egress. Induces host RETREG1/FAM134B-dependent reticulophagy by interacting with host HMGB1 and enhancing the association between HMGB1 and host BECN1. This induces endoplasmic reticulum stress and inflammatory responses and facilitates viral infection. This chain is ORF3a protein, found in Severe acute respiratory syndrome coronavirus 2 (2019-nCoV).